Here is a 365-residue protein sequence, read N- to C-terminus: Uroporphyrinogen decarboxylase (365 aa).

Substrate-binding positions include 27–31, D77, Y154, T209, and H327; that span reads RQAGR.

The protein belongs to the uroporphyrinogen decarboxylase family. As to quaternary structure, homodimer.

It localises to the cytoplasm. It catalyses the reaction uroporphyrinogen III + 4 H(+) = coproporphyrinogen III + 4 CO2. It functions in the pathway porphyrin-containing compound metabolism; protoporphyrin-IX biosynthesis; coproporphyrinogen-III from 5-aminolevulinate: step 4/4. Catalyzes the decarboxylation of four acetate groups of uroporphyrinogen-III to yield coproporphyrinogen-III. The polypeptide is Uroporphyrinogen decarboxylase (Nitrosospira multiformis (strain ATCC 25196 / NCIMB 11849 / C 71)).